A 142-amino-acid polypeptide reads, in one-letter code: MKTFTAKPETVKRDWFVVDAAGQTLGRLATEIASRLRGKHKPEYTPHVDTGDYIVVINAEQIRVTGAKTTDKIYYSHSGFPGGIKSINFEKLIAKAPERVIETAVKGMLPKNPLGRDMYRKLKVYAGAVHPHTAQQPLELKF.

This sequence belongs to the universal ribosomal protein uL13 family. Part of the 50S ribosomal subunit.

In terms of biological role, this protein is one of the early assembly proteins of the 50S ribosomal subunit, although it is not seen to bind rRNA by itself. It is important during the early stages of 50S assembly. The polypeptide is Large ribosomal subunit protein uL13 (Pseudomonas syringae pv. tomato (strain ATCC BAA-871 / DC3000)).